The primary structure comprises 207 residues: Ribosomal RNA small subunit methyltransferase G (207 aa).

S-adenosyl-L-methionine-binding positions include Gly77, Phe82, 100–102 (ERS), and Arg141.

The protein belongs to the methyltransferase superfamily. RNA methyltransferase RsmG family.

The protein resides in the cytoplasm. Functionally, specifically methylates the N7 position of a guanine in 16S rRNA. The protein is Ribosomal RNA small subunit methyltransferase G of Borrelia hermsii (strain HS1 / DAH).